Here is a 176-residue protein sequence, read N- to C-terminus: NAD(P)H-quinone oxidoreductase subunit 6, chloroplastic (176 aa).

5 consecutive transmembrane segments (helical) span residues 10-30 (FLLV…VLLT), 32-52 (PIFS…FHIP), 60-80 (AAQL…AVMF), 107-127 (IFVS…IWTT), and 152-172 (FFLP…GAIA).

This sequence belongs to the complex I subunit 6 family. As to quaternary structure, NDH is composed of at least 16 different subunits, 5 of which are encoded in the nucleus.

It localises to the plastid. It is found in the chloroplast thylakoid membrane. The catalysed reaction is a plastoquinone + NADH + (n+1) H(+)(in) = a plastoquinol + NAD(+) + n H(+)(out). It catalyses the reaction a plastoquinone + NADPH + (n+1) H(+)(in) = a plastoquinol + NADP(+) + n H(+)(out). NDH shuttles electrons from NAD(P)H:plastoquinone, via FMN and iron-sulfur (Fe-S) centers, to quinones in the photosynthetic chain and possibly in a chloroplast respiratory chain. The immediate electron acceptor for the enzyme in this species is believed to be plastoquinone. Couples the redox reaction to proton translocation, and thus conserves the redox energy in a proton gradient. The protein is NAD(P)H-quinone oxidoreductase subunit 6, chloroplastic (ndhG) of Buxus microphylla (Littleleaf boxwood).